We begin with the raw amino-acid sequence, 727 residues long: Long-chain-fatty-acid--[acyl-carrier-protein] ligase AEE15, chloroplastic (727 aa).

A chloroplast-targeting transit peptide spans 1–66 (MQIRLKPDYS…PSFRRFRVHC (66 aa)).

The protein belongs to the ATP-dependent AMP-binding enzyme family.

The protein resides in the plastid. Its subcellular location is the chloroplast. It carries out the reaction a long-chain fatty acid + holo-[ACP] + ATP = a long-chain fatty acyl-[ACP] + AMP + diphosphate. Functionally, probably involved in the activation of fatty acids to acyl-carrier-protein prior to fatty acid elongation in plastids. Acts on medium- to long-chain fatty acids. The protein is Long-chain-fatty-acid--[acyl-carrier-protein] ligase AEE15, chloroplastic (AAE15) of Arabidopsis thaliana (Mouse-ear cress).